A 478-amino-acid polypeptide reads, in one-letter code: Pyruvate kinase (478 aa).

R36 is a binding site for substrate. 3 residues coordinate K(+): N38, S40, and D70. Position 38-41 (38-41 (NFSH)) interacts with ATP. R77 and K160 together coordinate ATP. E225 contacts Mg(2+). The substrate site is built by G251, D252, and T284. D252 lines the Mg(2+) pocket.

Belongs to the pyruvate kinase family. As to quaternary structure, homotetramer. Mg(2+) serves as cofactor. The cofactor is K(+).

It carries out the reaction pyruvate + ATP = phosphoenolpyruvate + ADP + H(+). It functions in the pathway carbohydrate degradation; glycolysis; pyruvate from D-glyceraldehyde 3-phosphate: step 5/5. With respect to regulation, allosterically activated by AMP and by several sugar phosphates. Belongs to type II PK. This Haemophilus influenzae (strain ATCC 51907 / DSM 11121 / KW20 / Rd) protein is Pyruvate kinase (pykA).